The chain runs to 325 residues: Tartrate-resistant acid phosphatase type 5 (325 aa).

A signal peptide spans 1–21 (MDMWTALLILQALLLPSLADG). Fe cation is bound by residues Asp-33, Asp-71, Tyr-74, and Asn-110. Asn-116 and Asn-147 each carry an N-linked (GlcNAc...) asparagine glycan. The cysteines at positions 161 and 219 are disulfide-linked. The Fe cation site is built by His-205, His-240, and His-242.

The protein belongs to the metallophosphoesterase superfamily. Purple acid phosphatase family. In terms of assembly, exists either as monomer or, after proteolytic processing, as a dimer of two chains linked by disulfide bond(s). Fe cation is required as a cofactor.

It is found in the lysosome. It carries out the reaction a phosphate monoester + H2O = an alcohol + phosphate. Functionally, involved in osteopontin/bone sialoprotein dephosphorylation. Its expression seems to increase in certain pathological states such as Gaucher and Hodgkin diseases, the hairy cell, the B-cell, and the T-cell leukemias. The sequence is that of Tartrate-resistant acid phosphatase type 5 (ACP5) from Homo sapiens (Human).